A 276-amino-acid polypeptide reads, in one-letter code: Cholesterol 25-hydroxylase-like protein 1, member 2 (276 aa).

Asn-30 is a glycosylation site (N-linked (GlcNAc...) asparagine). The next 3 membrane-spanning stretches (helical) occupy residues 39-59, 90-110, and 126-146; these read LFPVVLTVSSYFVLVLPYLSC, GVTLYNHILLVIPAAVAQWMW, and LVGGVTGNLLLFDLQYFIWHF. Positions 134 to 265 constitute a Fatty acid hydroxylase domain; the sequence is LLLFDLQYFI…FSHWDKMFGT (132 aa). A Histidine box-1 motif is present at residues 144–148; it reads WHFLH. Positions 159-163 match the Histidine box-2 motif; that stretch reads HAIHH. Asn-164 is a glycosylation site (N-linked (GlcNAc...) asparagine). 2 helical membrane-spanning segments follow: residues 175 to 195 and 199 to 219; these read CLGGWELVTVGFWTTLNPVLL and LLTTWMFMVVHVYVSVEDHCG. The Histidine box-3 motif lies at 240 to 246; sequence KHDVHHQ.

The protein belongs to the sterol desaturase family. Fe cation is required as a cofactor.

It localises to the endoplasmic reticulum membrane. Functionally, may catalyze the formation of 25-hydroxycholesterol from cholesterol. The polypeptide is Cholesterol 25-hydroxylase-like protein 1, member 2 (Danio rerio (Zebrafish)).